A 561-amino-acid polypeptide reads, in one-letter code: Formate--tetrahydrofolate ligase (561 aa).

Position 70-77 (70-77 (TPAGEGKT)) interacts with ATP.

It belongs to the formate--tetrahydrofolate ligase family.

The catalysed reaction is (6S)-5,6,7,8-tetrahydrofolate + formate + ATP = (6R)-10-formyltetrahydrofolate + ADP + phosphate. Its pathway is one-carbon metabolism; tetrahydrofolate interconversion. The polypeptide is Formate--tetrahydrofolate ligase (Pelagibacter ubique (strain HTCC1062)).